We begin with the raw amino-acid sequence, 437 residues long: Aspartate--tRNA(Asp/Asn) ligase (437 aa).

Glu175 contributes to the L-aspartate binding site. The tract at residues 197 to 200 (QLYK) is aspartate. Residue Arg219 participates in L-aspartate binding. ATP is bound by residues 219–221 (RAE), 227–229 (RHL), and Glu360. Residues Glu360 and Ser363 each contribute to the Mg(2+) site. Ser363 and Arg367 together coordinate L-aspartate. An ATP-binding site is contributed by 408 to 411 (GAER).

It belongs to the class-II aminoacyl-tRNA synthetase family. Type 2 subfamily. In terms of assembly, homodimer. Mg(2+) is required as a cofactor.

The protein localises to the cytoplasm. The enzyme catalyses tRNA(Asx) + L-aspartate + ATP = L-aspartyl-tRNA(Asx) + AMP + diphosphate. Aspartyl-tRNA synthetase with relaxed tRNA specificity since it is able to aspartylate not only its cognate tRNA(Asp) but also tRNA(Asn). Reaction proceeds in two steps: L-aspartate is first activated by ATP to form Asp-AMP and then transferred to the acceptor end of tRNA(Asp/Asn). This chain is Aspartate--tRNA(Asp/Asn) ligase, found in Methanothermobacter thermautotrophicus (strain ATCC 29096 / DSM 1053 / JCM 10044 / NBRC 100330 / Delta H) (Methanobacterium thermoautotrophicum).